We begin with the raw amino-acid sequence, 223 residues long: Ribonuclease HII (223 aa).

Positions 1–219 (MMIAGIDEAG…VENIREELEK (219 aa)) constitute an RNase H type-2 domain. Residues D7, E8, and D105 each coordinate a divalent metal cation.

The protein belongs to the RNase HII family. Mn(2+) is required as a cofactor. The cofactor is Mg(2+).

Its subcellular location is the cytoplasm. The catalysed reaction is Endonucleolytic cleavage to 5'-phosphomonoester.. Its function is as follows. Endonuclease that specifically degrades the RNA of RNA-DNA hybrids. The polypeptide is Ribonuclease HII (Methanosarcina acetivorans (strain ATCC 35395 / DSM 2834 / JCM 12185 / C2A)).